A 125-amino-acid polypeptide reads, in one-letter code: Cyclic diguanosine monophosphate-binding protein PA4608 (125 aa).

Position 6–13 (6–13) interacts with 3',3'-c-di-GMP; sequence DERRRFHR. The region spanning 7–103 is the PilZ domain; sequence ERRRFHRIAF…SISHLRRLVE (97 aa). Residues 9–13 carry the RXXXR motif; surrounds the surface of the c-di-GMP binding site motif; sequence RRFHR. A DXSXXG motif; surrounds the surface of the c-di-GMP binding site motif is present at residues 35 to 40; that stretch reads DVSLHG. Trp77 serves as a coordination point for 3',3'-c-di-GMP.

In terms of assembly, monomer in both c-di-GMP-bound and free forms.

Its function is as follows. Binds the second messenger bis-(3'-5') cyclic dimeric guanosine monophosphate (c-di-GMP). Can bind two c-di-GMP molecules per monomer. May play a role in bacterial second-messenger regulated processes. Binding to c-di-GMP induces a conformational change of the C- and N-termini resulting in the exposure of a highly negative surface on one side of the protein to a possible effector protein. The chain is Cyclic diguanosine monophosphate-binding protein PA4608 from Pseudomonas aeruginosa (strain ATCC 15692 / DSM 22644 / CIP 104116 / JCM 14847 / LMG 12228 / 1C / PRS 101 / PAO1).